We begin with the raw amino-acid sequence, 920 residues long: Androgen receptor (920 aa).

Residues 1-559 (MEVQLGLGRV…IDYYFPPQKT (559 aa)) are modulating. The interaction with ZNF318 stretch occupies residues 1 to 587 (MEVQLGLGRV…GSCKVFFKRA (587 aa)). Disordered regions lie at residues 36-167 (NPGP…LSLL) and 195-228 (QQQQ…YLGG). Low complexity predominate over residues 44–91 (AASAAPPGASLLLLQQQQQQQQQQQQQQQQQQQQQQQETSPRQQQQQQ). Phosphoserine; by CDK9 is present on Ser-83. Ser-96 is modified (phosphoserine). A compositionally biased stretch (low complexity) spans 195–217 (QQQQQEAVSEGSSSGRAREASGA). Residues 218 to 228 (PTSSKDNYLGG) are compositionally biased toward polar residues. The residue at position 225 (Tyr-225) is a Phosphotyrosine; by CSK. The residue at position 258 (Ser-258) is a Phosphoserine. At Tyr-269 the chain carries Phosphotyrosine; by CSK and TNK2. Tyr-309, Tyr-348, Tyr-359, and Tyr-364 each carry phosphotyrosine; by CSK. Tyr-365 carries the phosphotyrosine; by CSK and TNK2 modification. Lys-388 is covalently cross-linked (Glycyl lysine isopeptide (Lys-Gly) (interchain with G-Cter in SUMO)). Tyr-395 is modified (phosphotyrosine; by CSK). Residue Lys-521 forms a Glycyl lysine isopeptide (Lys-Gly) (interchain with G-Cter in SUMO) linkage. Tyr-535 and Tyr-552 each carry phosphotyrosine; by CSK. The interaction with LPXN stretch occupies residues 552-919 (YYFPPQKTCL…GKVKPIYFHT (368 aa)). NR C4-type zinc fingers lie at residues 560–580 (CLIC…CGSC) and 596–620 (CASR…LRKC). The nuclear receptor DNA-binding region spans 560–632 (CLICGDEASG…AGMTLGARKL (73 aa)). Positions 572-662 (YGALTCGSCK…TEETTQKLTV (91 aa)) are interaction with HIPK3. The tract at residues 592 to 919 (QKYLCASRND…GKVKPIYFHT (328 aa)) is interaction with CCAR1. Residues 625-919 (MTLGARKLKK…GKVKPIYFHT (295 aa)) form an interaction with KAT7 region. Ser-651 is modified (phosphoserine; by STK4/MST1). Residues 669–900 (ECQPIFLNVL…DFPEMMAEII (232 aa)) form the NR LBD domain. 17beta-hydroxy-5alpha-androstan-3-one is bound by residues Asn-706 and Arg-753. Residues Lys-846 and Lys-848 each participate in a glycyl lysine isopeptide (Lys-Gly) (interchain with G-Cter in ubiquitin) cross-link. Position 878 (Thr-878) interacts with 17beta-hydroxy-5alpha-androstan-3-one. Position 916 is a phosphotyrosine; by CSK (Tyr-916).

It belongs to the nuclear hormone receptor family. NR3 subfamily. Binds DNA as a homodimer. Part of a ternary complex containing AR, EFCAB6/DJBP and PARK7. Interacts with HIPK3 and NR0B2 in the presence of androgen. The ligand binding domain interacts with KAT7/HBO1 in the presence of dihydrotestosterone. Interacts with EFCAB6/DJBP, PQBP1, RANBP9, RBAK, SPDEF, SRA1, TGFB1I1 and RREB1. Interacts with ZMIZ1/ZIMP10 and ZMIZ2/ZMIP7 which both enhance its transactivation activity. Interacts with SLC30A9 and RAD54L2/ARIP4. Interacts with MACROD1 (via macro domain). Interacts via the ligand-binding domain with LXXLL and FXXLF motifs from NCOA1, NCOA2, NCOA3 and MAGEA11. Interacts (via nuclear receptor DNA binding domain and nuclear receptor ligand binding domain) with NCOA4. The AR N-terminal poly-Gln region binds Ran resulting in enhancement of AR-mediated transactivation. Ran-binding decreases as the poly-Gln length increases. Interacts with HIP1 (via coiled coil domain). Interacts (via ligand-binding domain) with TRIM68. Interacts with TNK2. Interacts with USP26. Interacts with RNF6. Interacts (regulated by RNF6 probably through polyubiquitination) with RNF14; regulates AR transcriptional activity. Interacts with PRMT2 and TRIM24. Interacts with RACK1. Interacts with RANBP10; this interaction enhances dihydrotestosterone-induced AR transcriptional activity. Interacts with PRPF6 in a hormone-independent way; this interaction enhances dihydrotestosterone-induced AR transcriptional activity. Interacts with STK4/MST1. Interacts with ZIPK/DAPK3. Interacts with LPXN. Interacts with MAK. Part of a complex containing AR, MAK and NCOA3. Interacts with CRY1. Interacts with CCAR1 and GATA2. Interacts with ZNF318. Interacts with BUD31. Interacts with ARID4A. Interacts with ARID4B. Interacts (via NR LBD domain) with ZBTB7A; the interaction is direct and androgen-dependent. Interacts with NCOR1. Interacts with NCOR2. Interacts with CRY2 in a ligand-dependent manner. Sumoylated on Lys-388 (major) and Lys-521. Ubiquitinated. Deubiquitinated by USP26. 'Lys-6' and 'Lys-27'-linked polyubiquitination by RNF6 modulates AR transcriptional activity and specificity. In terms of processing, phosphorylated in prostate cancer cells in response to several growth factors including EGF. Phosphorylation is induced by c-Src kinase (CSK). Tyr-535 is one of the major phosphorylation sites and an increase in phosphorylation and Src kinase activity is associated with prostate cancer progression. Phosphorylation by TNK2 enhances the DNA-binding and transcriptional activity and may be responsible for androgen-independent progression of prostate cancer. Phosphorylation at Ser-83 by CDK9 regulates AR promoter selectivity and cell growth. Phosphorylation by PAK6 leads to AR-mediated transcription inhibition. Post-translationally, palmitoylated by ZDHHC7 and ZDHHC21. Palmitoylation is required for plasma membrane targeting and for rapid intracellular signaling via ERK and AKT kinases and cAMP generation. In terms of tissue distribution, mainly expressed in heart and skeletal muscle. Expressed in basal and stromal cells of the prostate (at protein level).

It localises to the nucleus. The protein localises to the cytoplasm. Its activity is regulated as follows. AIM-100 (4-amino-5,6-biaryl-furo[2,3-d]pyrimidine) suppresses TNK2-mediated phosphorylation at Tyr-269. Inhibits the binding of the Tyr-269 phosphorylated form to androgen-responsive enhancers (AREs) and its transcriptional activity. Steroid hormone receptors are ligand-activated transcription factors that regulate eukaryotic gene expression and affect cellular proliferation and differentiation in target tissues. Transcription factor activity is modulated by bound coactivator and corepressor proteins like ZBTB7A that recruits NCOR1 and NCOR2 to the androgen response elements/ARE on target genes, negatively regulating androgen receptor signaling and androgen-induced cell proliferation. Transcription activation is also down-regulated by NR0B2. Activated, but not phosphorylated, by HIPK3 and ZIPK/DAPK3. In terms of biological role, lacks the C-terminal ligand-binding domain and may therefore constitutively activate the transcription of a specific set of genes independently of steroid hormones. This is Androgen receptor (AR) from Homo sapiens (Human).